A 233-amino-acid polypeptide reads, in one-letter code: 5'-methylthioadenosine/S-adenosylhomocysteine nucleosidase (233 aa).

Glu12 acts as the Proton acceptor in catalysis. Substrate contacts are provided by residues Gly78, Ile156, and 177 to 178 (ME). Asp201 (proton donor) is an active-site residue.

It belongs to the PNP/UDP phosphorylase family. MtnN subfamily.

The catalysed reaction is S-adenosyl-L-homocysteine + H2O = S-(5-deoxy-D-ribos-5-yl)-L-homocysteine + adenine. The enzyme catalyses S-methyl-5'-thioadenosine + H2O = 5-(methylsulfanyl)-D-ribose + adenine. It catalyses the reaction 5'-deoxyadenosine + H2O = 5-deoxy-D-ribose + adenine. It participates in amino-acid biosynthesis; L-methionine biosynthesis via salvage pathway; S-methyl-5-thio-alpha-D-ribose 1-phosphate from S-methyl-5'-thioadenosine (hydrolase route): step 1/2. Functionally, catalyzes the irreversible cleavage of the glycosidic bond in both 5'-methylthioadenosine (MTA) and S-adenosylhomocysteine (SAH/AdoHcy) to adenine and the corresponding thioribose, 5'-methylthioribose and S-ribosylhomocysteine, respectively. Also cleaves 5'-deoxyadenosine, a toxic by-product of radical S-adenosylmethionine (SAM) enzymes, into 5-deoxyribose and adenine. In Listeria monocytogenes serotype 4b (strain F2365), this protein is 5'-methylthioadenosine/S-adenosylhomocysteine nucleosidase.